We begin with the raw amino-acid sequence, 239 residues long: Ribonuclease Le2 (239 aa).

5 cysteine pairs are disulfide-bonded: Cys5-Cys22, Cys13-Cys58, Cys21-Cys126, Cys66-Cys118, and Cys191-Cys225. Residues His51, Glu111, and His115 contribute to the active site.

This sequence belongs to the RNase T2 family.

It catalyses the reaction a ribonucleotidyl-ribonucleotide-RNA + H2O = a 3'-end 3'-phospho-ribonucleotide-RNA + a 5'-end dephospho-ribonucleoside-RNA + H(+). Functionally, this is a base non-specific and adenylic acid preferential ribonuclease. This is Ribonuclease Le2 from Lentinula edodes (Shiitake mushroom).